A 201-amino-acid polypeptide reads, in one-letter code: Small ribosomal subunit protein uS4c (201 aa).

A disordered region spans residues 20 to 43 (GLTSKRPRAGSDLRNQSRAGKKSQ). In terms of domain architecture, S4 RNA-binding spans 89–150 (MRLDNILFRL…EQKSRVMIQN (62 aa)).

The protein belongs to the universal ribosomal protein uS4 family. In terms of assembly, part of the 30S ribosomal subunit. Contacts protein S5. The interaction surface between S4 and S5 is involved in control of translational fidelity.

It is found in the plastid. Its subcellular location is the chloroplast. Functionally, one of the primary rRNA binding proteins, it binds directly to 16S rRNA where it nucleates assembly of the body of the 30S subunit. In terms of biological role, with S5 and S12 plays an important role in translational accuracy. The chain is Small ribosomal subunit protein uS4c (rps4) from Populus alba (White poplar).